The chain runs to 191 residues: Leucyl/phenylalanyl-tRNA--protein transferase (191 aa).

Belongs to the L/F-transferase family.

It is found in the cytoplasm. The catalysed reaction is N-terminal L-lysyl-[protein] + L-leucyl-tRNA(Leu) = N-terminal L-leucyl-L-lysyl-[protein] + tRNA(Leu) + H(+). It carries out the reaction N-terminal L-arginyl-[protein] + L-leucyl-tRNA(Leu) = N-terminal L-leucyl-L-arginyl-[protein] + tRNA(Leu) + H(+). The enzyme catalyses L-phenylalanyl-tRNA(Phe) + an N-terminal L-alpha-aminoacyl-[protein] = an N-terminal L-phenylalanyl-L-alpha-aminoacyl-[protein] + tRNA(Phe). Functions in the N-end rule pathway of protein degradation where it conjugates Leu, Phe and, less efficiently, Met from aminoacyl-tRNAs to the N-termini of proteins containing an N-terminal arginine or lysine. In Trichormus variabilis (strain ATCC 29413 / PCC 7937) (Anabaena variabilis), this protein is Leucyl/phenylalanyl-tRNA--protein transferase.